The sequence spans 201 residues: Large ribosomal subunit protein bL25 (201 aa).

It belongs to the bacterial ribosomal protein bL25 family. CTC subfamily. As to quaternary structure, part of the 50S ribosomal subunit; part of the 5S rRNA/L5/L18/L25 subcomplex. Contacts the 5S rRNA. Binds to the 5S rRNA independently of L5 and L18.

Its function is as follows. This is one of the proteins that binds to the 5S RNA in the ribosome where it forms part of the central protuberance. The polypeptide is Large ribosomal subunit protein bL25 (Burkholderia vietnamiensis (strain G4 / LMG 22486) (Burkholderia cepacia (strain R1808))).